The sequence spans 570 residues: Probable diguanylate cyclase DgcQ (570 aa).

2 helical membrane passes run 20–40 (FGPGHVVNTCFLIVMLFSTLL) and 360–380 (IALTLLWVLFTAMLLISWGVI). The 136-residue stretch at 428–563 (QPFSVIQLDL…GRNRICASDA (136 aa)) folds into the GGDEF domain. Position 436 (Asp-436) interacts with Mg(2+). 3 residues coordinate substrate: Asn-444, His-449, and Asp-453. Residue Glu-479 participates in Mg(2+) binding. Glu-479 (proton acceptor) is an active-site residue.

In terms of assembly, homodimer. Mg(2+) is required as a cofactor.

It localises to the cell inner membrane. It carries out the reaction 2 GTP = 3',3'-c-di-GMP + 2 diphosphate. The protein operates within glycan metabolism; bacterial cellulose biosynthesis. Its pathway is purine metabolism; 3',5'-cyclic di-GMP biosynthesis. Catalyzes the synthesis of cyclic-di-GMP (c-di-GMP) via the condensation of 2 GTP molecules. Cyclic-di-GMP is a second messenger which controls cell surface-associated traits in bacteria. Involved in the regulation of cellulose production. This Salmonella choleraesuis (strain SC-B67) protein is Probable diguanylate cyclase DgcQ.